The chain runs to 193 residues: Imidazoleglycerol-phosphate dehydratase (193 aa).

Belongs to the imidazoleglycerol-phosphate dehydratase family.

The protein localises to the cytoplasm. It catalyses the reaction D-erythro-1-(imidazol-4-yl)glycerol 3-phosphate = 3-(imidazol-4-yl)-2-oxopropyl phosphate + H2O. It participates in amino-acid biosynthesis; L-histidine biosynthesis; L-histidine from 5-phospho-alpha-D-ribose 1-diphosphate: step 6/9. This is Imidazoleglycerol-phosphate dehydratase from Saccharolobus islandicus (strain Y.N.15.51 / Yellowstone #2) (Sulfolobus islandicus).